The primary structure comprises 313 residues: Pyrimidine-specific ribonucleoside hydrolase RihB (313 aa).

D11 (proton acceptor) is an active-site residue. Ca(2+) is bound by residues D11, D16, and V124. Substrate contacts are provided by Q227 and H239. D240 lines the Ca(2+) pocket.

It belongs to the IUNH family. RihB subfamily. As to quaternary structure, homotetramer. Ca(2+) is required as a cofactor.

It catalyses the reaction a pyrimidine ribonucleoside + H2O = a pyrimidine nucleobase + D-ribose. In terms of biological role, hydrolyzes cytidine or uridine to ribose and cytosine or uracil, respectively. Has a clear preference for cytidine over uridine. Strictly specific for ribonucleosides. This is Pyrimidine-specific ribonucleoside hydrolase RihB from Escherichia coli O157:H7.